Here is a 168-residue protein sequence, read N- to C-terminus: ATP synthase subunit b (168 aa).

Residues serine 9–leucine 29 form a helical membrane-spanning segment.

This sequence belongs to the ATPase B chain family. F-type ATPases have 2 components, F(1) - the catalytic core - and F(0) - the membrane proton channel. F(1) has five subunits: alpha(3), beta(3), gamma(1), delta(1), epsilon(1). F(0) has three main subunits: a(1), b(2) and c(10-14). The alpha and beta chains form an alternating ring which encloses part of the gamma chain. F(1) is attached to F(0) by a central stalk formed by the gamma and epsilon chains, while a peripheral stalk is formed by the delta and b chains.

It localises to the cell membrane. In terms of biological role, f(1)F(0) ATP synthase produces ATP from ADP in the presence of a proton or sodium gradient. F-type ATPases consist of two structural domains, F(1) containing the extramembraneous catalytic core and F(0) containing the membrane proton channel, linked together by a central stalk and a peripheral stalk. During catalysis, ATP synthesis in the catalytic domain of F(1) is coupled via a rotary mechanism of the central stalk subunits to proton translocation. Its function is as follows. Component of the F(0) channel, it forms part of the peripheral stalk, linking F(1) to F(0). This Bacillus cereus (strain B4264) protein is ATP synthase subunit b.